The following is a 206-amino-acid chain: RNA pyrophosphohydrolase (206 aa).

The Nudix hydrolase domain occupies 6–150 (GYRPNVGIVI…KRDVYRKVMK (145 aa)). The Nudix box signature appears at 38-59 (GGINEGENIETAMYRELYEEVG). Over residues 162–191 (KPETVEKPRVERTEKRDFQKRDNQKREFRK) the composition is skewed to basic and acidic residues. The tract at residues 162 to 206 (KPETVEKPRVERTEKRDFQKRDNQKREFRKSARMWNNSHQKGKAQ) is disordered.

The protein belongs to the Nudix hydrolase family. RppH subfamily. It depends on a divalent metal cation as a cofactor.

Accelerates the degradation of transcripts by removing pyrophosphate from the 5'-end of triphosphorylated RNA, leading to a more labile monophosphorylated state that can stimulate subsequent ribonuclease cleavage. The protein is RNA pyrophosphohydrolase of Actinobacillus pleuropneumoniae serotype 5b (strain L20).